A 1706-amino-acid polypeptide reads, in one-letter code: Histone acetyltransferase HAC12 (1706 aa).

Disordered regions lie at residues 1–33, 251–284, 397–456, and 524–543; these read MNVQ…MQNL, TNNN…NSHM, VSRV…LGKT, and QNSQ…SDSS. Over residues 397–406 the composition is skewed to polar residues; that stretch reads VSRVNSSLSH. The segment covering 407–434 has biased composition (low complexity); it reads QQQFQQPPNRFQQQPNQIQQQQQQFLNQ. A TAZ-type 1 zinc finger spans residues 637 to 716; that stretch reads HDPKFKNQQR…DPRCPVCVPV (80 aa). The disordered stretch occupies residues 791–909; that stretch reads TESCKSSIVS…PELTSKSRKP (119 aa). The span at 794–805 shows a compositional bias: polar residues; that stretch reads CKSSIVSTTEAD. Basic and acidic residues-rich tracts occupy residues 809–829 and 870–896; these read DAER…KVEI and PKQE…KEEL. A PHD-type zinc finger spans residues 998 to 1075; that stretch reads HYFCIPCYNE…EYTCPYCYVI (78 aa). Residues 1090–1526 enclose the CBP/p300-type HAT domain; the sequence is VLGAKDLPRT…VLYHLHNPTA (437 aa). Acetyl-CoA is bound by residues 1213–1215, 1232–1233, and tryptophan 1288; these read LDS and RT. 2 consecutive ZZ-type zinc fingers follow at residues 1408–1471 and 1528–1581; these read HLQH…IADI and AFVT…SLAD. 16 residues coordinate Zn(2+): cysteine 1413, cysteine 1416, cysteine 1428, cysteine 1431, cysteine 1437, cysteine 1440, histidine 1453, histidine 1461, cysteine 1533, cysteine 1536, cysteine 1548, cysteine 1551, cysteine 1557, cysteine 1560, histidine 1569, and histidine 1571. A TAZ-type 2 zinc finger spans residues 1588–1671; it reads EARQLRVLQL…ECDVPRCGDL (84 aa).

It is found in the nucleus. The enzyme catalyses L-lysyl-[protein] + acetyl-CoA = N(6)-acetyl-L-lysyl-[protein] + CoA + H(+). Its function is as follows. Acetyltransferase enzyme. Acetylates histones, giving a specific tag for transcriptional activation. The sequence is that of Histone acetyltransferase HAC12 (HAC12) from Arabidopsis thaliana (Mouse-ear cress).